The following is a 252-amino-acid chain: tRNA (guanine-N(7)-)-methyltransferase (252 aa).

Residues E51, D76, N103, and D125 each coordinate S-adenosyl-L-methionine. D125 is an active-site residue. Substrate-binding positions include K129, D159, and 199-202 (TYYE).

This sequence belongs to the class I-like SAM-binding methyltransferase superfamily. TrmB family.

It carries out the reaction guanosine(46) in tRNA + S-adenosyl-L-methionine = N(7)-methylguanosine(46) in tRNA + S-adenosyl-L-homocysteine. It functions in the pathway tRNA modification; N(7)-methylguanine-tRNA biosynthesis. Its function is as follows. Catalyzes the formation of N(7)-methylguanine at position 46 (m7G46) in tRNA. This is tRNA (guanine-N(7)-)-methyltransferase from Bacteroides fragilis (strain YCH46).